We begin with the raw amino-acid sequence, 158 residues long: NAD(P)H-quinone oxidoreductase subunit J, chloroplastic (158 aa).

This sequence belongs to the complex I 30 kDa subunit family. As to quaternary structure, NDH is composed of at least 16 different subunits, 5 of which are encoded in the nucleus.

The protein localises to the plastid. The protein resides in the chloroplast thylakoid membrane. It carries out the reaction a plastoquinone + NADH + (n+1) H(+)(in) = a plastoquinol + NAD(+) + n H(+)(out). The catalysed reaction is a plastoquinone + NADPH + (n+1) H(+)(in) = a plastoquinol + NADP(+) + n H(+)(out). NDH shuttles electrons from NAD(P)H:plastoquinone, via FMN and iron-sulfur (Fe-S) centers, to quinones in the photosynthetic chain and possibly in a chloroplast respiratory chain. The immediate electron acceptor for the enzyme in this species is believed to be plastoquinone. Couples the redox reaction to proton translocation, and thus conserves the redox energy in a proton gradient. This is NAD(P)H-quinone oxidoreductase subunit J, chloroplastic from Chloranthus spicatus (Chulantree).